Here is a 239-residue protein sequence, read N- to C-terminus: Ribonuclease PH (239 aa).

Residues R86 and 124–126 each bind phosphate; that span reads GTR.

Belongs to the RNase PH family. As to quaternary structure, homohexameric ring arranged as a trimer of dimers.

The enzyme catalyses tRNA(n+1) + phosphate = tRNA(n) + a ribonucleoside 5'-diphosphate. Phosphorolytic 3'-5' exoribonuclease that plays an important role in tRNA 3'-end maturation. Removes nucleotide residues following the 3'-CCA terminus of tRNAs; can also add nucleotides to the ends of RNA molecules by using nucleoside diphosphates as substrates, but this may not be physiologically important. Probably plays a role in initiation of 16S rRNA degradation (leading to ribosome degradation) during starvation. This Sinorhizobium fredii (strain NBRC 101917 / NGR234) protein is Ribonuclease PH.